A 381-amino-acid polypeptide reads, in one-letter code: RxLR effector protein 54 (381 aa).

The signal sequence occupies residues 1–19; the sequence is MRFQSIMMLTITCAGTCLA. The RxLR-dEER signature appears at 57–75; that stretch reads RFLRFDTVARDTAGNDEER. 5 WY-domain regions span residues 97 to 150, 151 to 198, 199 to 247, 251 to 299, and 302 to 354; these read SAEE…ANNG, NQAF…SLSG, NWIR…WNKN, FFGD…LLTS, and SHKT…RDKI. Residues 372-381 carry the ATG8 interacting motif motif; that stretch reads KPLDFDWEIV.

Belongs to the RxLR effector family. As to quaternary structure, interacts via its C-terminal AIM with host ATG8CL.

It is found in the secreted. It localises to the host nucleus. Its subcellular location is the host cytoplasm. Its function is as follows. Effector that specifically binds host autophagy protein ATG8CL of the ATG8 family to stimulate autophagosome formation and subsequent autophagy rather than blocking autophagic flux. The pathogen remodels host-microbe interface by co-opting the host autophagy machinery which plays a key role in plant immunity. PexRD54 competes with the autophagy cargo receptor Joka2 to deplete it out of ATG8CL complexes and interferes with Joka2's positive effect on pathogen defense. The protein is RxLR effector protein 54 of Phytophthora infestans (strain T30-4) (Potato late blight agent).